The following is a 438-amino-acid chain: UPF0229 protein NGR_c12350 (438 aa).

Over residues 1-16 the composition is skewed to basic and acidic residues; that stretch reads MPNFIDRRLNPKDKSL. Disordered stretches follow at residues 1 to 20 and 83 to 107; these read MPNF…GNRQ and FAAG…GTGQ. Residues 94 to 105 are compositionally biased toward gly residues; that stretch reads SGGGATGAGAGT.

This sequence belongs to the UPF0229 family.

The protein is UPF0229 protein NGR_c12350 of Sinorhizobium fredii (strain NBRC 101917 / NGR234).